We begin with the raw amino-acid sequence, 438 residues long: 3-phosphoshikimate 1-carboxyvinyltransferase 1 (438 aa).

Residues Lys30, Ser31, and Arg35 each contribute to the 3-phosphoshikimate site. Lys30 provides a ligand contact to phosphoenolpyruvate. Gly104 and Arg132 together coordinate phosphoenolpyruvate. 6 residues coordinate 3-phosphoshikimate: Ser178, Ser179, Gln180, Ser207, Glu326, and His353. Gln180 contacts phosphoenolpyruvate. The Proton acceptor role is filled by Glu326. 3 residues coordinate phosphoenolpyruvate: Arg357, Arg398, and Lys423.

Belongs to the EPSP synthase family. Monomer.

The protein localises to the cytoplasm. The catalysed reaction is 3-phosphoshikimate + phosphoenolpyruvate = 5-O-(1-carboxyvinyl)-3-phosphoshikimate + phosphate. It participates in metabolic intermediate biosynthesis; chorismate biosynthesis; chorismate from D-erythrose 4-phosphate and phosphoenolpyruvate: step 6/7. Its function is as follows. Catalyzes the transfer of the enolpyruvyl moiety of phosphoenolpyruvate (PEP) to the 5-hydroxyl of shikimate-3-phosphate (S3P) to produce enolpyruvyl shikimate-3-phosphate and inorganic phosphate. The sequence is that of 3-phosphoshikimate 1-carboxyvinyltransferase 1 from Streptomyces coelicolor (strain ATCC BAA-471 / A3(2) / M145).